Consider the following 215-residue polypeptide: Thiamine import ATP-binding protein ThiQ (215 aa).

One can recognise an ABC transporter domain in the interval Ile2–Val215. Gly32–Ser39 contacts ATP.

Belongs to the ABC transporter superfamily. Thiamine importer (TC 3.A.1.19.1) family. In terms of assembly, the complex is composed of two ATP-binding proteins (ThiQ), two transmembrane proteins (ThiP) and a solute-binding protein (ThiB).

The protein localises to the cell inner membrane. It catalyses the reaction thiamine(out) + ATP + H2O = thiamine(in) + ADP + phosphate + H(+). Functionally, part of the ABC transporter complex ThiBPQ involved in thiamine import. Responsible for energy coupling to the transport system. The polypeptide is Thiamine import ATP-binding protein ThiQ (Haemophilus influenzae (strain 86-028NP)).